The following is a 151-amino-acid chain: Aspartate carbamoyltransferase regulatory chain (151 aa).

Residues Cys-108, Cys-113, Cys-138, and Cys-141 each contribute to the Zn(2+) site.

It belongs to the PyrI family. Contains catalytic and regulatory chains. Zn(2+) is required as a cofactor.

In terms of biological role, involved in allosteric regulation of aspartate carbamoyltransferase. This is Aspartate carbamoyltransferase regulatory chain from Pyrobaculum islandicum (strain DSM 4184 / JCM 9189 / GEO3).